We begin with the raw amino-acid sequence, 247 residues long: Chymase (247 aa).

Residues methionine 1 to alanine 19 form the signal peptide. Positions glycine 20–glutamate 21 are cleaved as a propeptide — activation peptide. Residues isoleucine 22 to arginine 245 enclose the Peptidase S1 domain. The cysteines at positions 51 and 67 are disulfide-linked. Residue histidine 66 is the Charge relay system of the active site. Asparagine 80 is a glycosylation site (N-linked (GlcNAc...) asparagine). Aspartate 110 (charge relay system) is an active-site residue. 2 disulfides stabilise this stretch: cysteine 144-cysteine 209 and cysteine 175-cysteine 188. Residue serine 203 is the Charge relay system of the active site.

This sequence belongs to the peptidase S1 family. Granzyme subfamily. Mast cells.

It is found in the secreted. The protein localises to the cytoplasmic granule. It catalyses the reaction Preferential cleavage: Phe-|-Xaa &gt; Tyr-|-Xaa &gt; Trp-|-Xaa &gt; Leu-|-Xaa.. Its function is as follows. Major secreted protease of mast cells with suspected roles in vasoactive peptide generation, extracellular matrix degradation, and regulation of gland secretion. This is Chymase (Cma1) from Mus musculus (Mouse).